The chain runs to 145 residues: Large ribosomal subunit protein uL15 (145 aa).

The tract at residues 1–50 (MRLNTLSPAAGSKPEKQRRGRGIGSGLGKTGGRGVKGQTSRSGGGKVRAG) is disordered. Over residues 22–35 (GIGSGLGKTGGRGV) the composition is skewed to gly residues.

The protein belongs to the universal ribosomal protein uL15 family. Part of the 50S ribosomal subunit.

Functionally, binds to the 23S rRNA. The polypeptide is Large ribosomal subunit protein uL15 (Aeromonas salmonicida (strain A449)).